The sequence spans 422 residues: Multifunctional CCA protein (422 aa).

Glycine 8 and arginine 11 together coordinate ATP. The CTP site is built by glycine 8 and arginine 11. Residues aspartate 21 and aspartate 23 each contribute to the Mg(2+) site. Positions 91, 137, and 140 each coordinate ATP. Arginine 91, arginine 137, and arginine 140 together coordinate CTP. The HD domain occupies 228–329 (TGLHSLMALE…VKLLQSCDAW (102 aa)). The tract at residues 403 to 422 (FKQDNAPEAQEKGGEDVGLT) is disordered.

Belongs to the tRNA nucleotidyltransferase/poly(A) polymerase family. Bacterial CCA-adding enzyme type 1 subfamily. In terms of assembly, monomer. Can also form homodimers and oligomers. Mg(2+) is required as a cofactor. Ni(2+) serves as cofactor.

The catalysed reaction is a tRNA precursor + 2 CTP + ATP = a tRNA with a 3' CCA end + 3 diphosphate. It carries out the reaction a tRNA with a 3' CCA end + 2 CTP + ATP = a tRNA with a 3' CCACCA end + 3 diphosphate. Its function is as follows. Catalyzes the addition and repair of the essential 3'-terminal CCA sequence in tRNAs without using a nucleic acid template. Adds these three nucleotides in the order of C, C, and A to the tRNA nucleotide-73, using CTP and ATP as substrates and producing inorganic pyrophosphate. tRNA 3'-terminal CCA addition is required both for tRNA processing and repair. Also involved in tRNA surveillance by mediating tandem CCA addition to generate a CCACCA at the 3' terminus of unstable tRNAs. While stable tRNAs receive only 3'-terminal CCA, unstable tRNAs are marked with CCACCA and rapidly degraded. This is Multifunctional CCA protein from Hahella chejuensis (strain KCTC 2396).